The chain runs to 180 residues: NADH-quinone oxidoreductase subunit I (180 aa).

2 4Fe-4S ferredoxin-type domains span residues 50 to 80 (LTRNIDGGERCVACNLCAVVCPVDCISLQKS) and 90 to 119 (KFFRINFSRCIFCGLCEEACPTAAIQLMPD). Cys-60, Cys-63, Cys-66, Cys-70, Cys-99, Cys-102, Cys-105, and Cys-109 together coordinate [4Fe-4S] cluster.

This sequence belongs to the complex I 23 kDa subunit family. In terms of assembly, NDH-1 is composed of 13 different subunits. Subunits NuoA, H, J, K, L, M, N constitute the membrane sector of the complex. [4Fe-4S] cluster serves as cofactor.

The protein localises to the cell membrane. The catalysed reaction is a quinone + NADH + 5 H(+)(in) = a quinol + NAD(+) + 4 H(+)(out). In terms of biological role, NDH-1 shuttles electrons from NADH, via FMN and iron-sulfur (Fe-S) centers, to quinones in the respiratory chain. The immediate electron acceptor for the enzyme in this species is believed to be ubiquinone. Couples the redox reaction to proton translocation (for every two electrons transferred, four hydrogen ions are translocated across the cytoplasmic membrane), and thus conserves the redox energy in a proton gradient. In Buchnera aphidicola subsp. Schizaphis graminum (strain Sg), this protein is NADH-quinone oxidoreductase subunit I.